The primary structure comprises 222 residues: Urease accessory protein UreF (222 aa).

It belongs to the UreF family. UreD, UreF and UreG form a complex that acts as a GTP-hydrolysis-dependent molecular chaperone, activating the urease apoprotein by helping to assemble the nickel containing metallocenter of UreC. The UreE protein probably delivers the nickel.

It localises to the cytoplasm. In terms of biological role, required for maturation of urease via the functional incorporation of the urease nickel metallocenter. This Hahella chejuensis (strain KCTC 2396) protein is Urease accessory protein UreF.